Reading from the N-terminus, the 256-residue chain is uncharacterized protein (256 aa).

Residues 1-24 (MIKRVNKLVLGISLLFLVISIAAG) form the signal peptide. The N-palmitoyl cysteine moiety is linked to residue C25. C25 carries the S-diacylglycerol cysteine lipid modification.

It belongs to the staphylococcal tandem lipoprotein family.

Its subcellular location is the cell membrane. This is an uncharacterized protein from Staphylococcus aureus.